We begin with the raw amino-acid sequence, 226 residues long: Translation initiation factor IF-3 (226 aa).

The disordered stretch occupies residues 195–226 (FVPLAPLSPEDLIEEPELESESDSDAEPESDN). A compositionally biased stretch (acidic residues) spans 205–226 (DLIEEPELESESDSDAEPESDN).

The protein belongs to the IF-3 family. In terms of assembly, monomer.

It is found in the cytoplasm. In terms of biological role, IF-3 binds to the 30S ribosomal subunit and shifts the equilibrium between 70S ribosomes and their 50S and 30S subunits in favor of the free subunits, thus enhancing the availability of 30S subunits on which protein synthesis initiation begins. This chain is Translation initiation factor IF-3, found in Chlorobium chlorochromatii (strain CaD3).